The sequence spans 160 residues: Large ribosomal subunit protein uL13 (160 aa).

The protein belongs to the universal ribosomal protein uL13 family. As to quaternary structure, part of the 50S ribosomal subunit.

In terms of biological role, this protein is one of the early assembly proteins of the 50S ribosomal subunit, although it is not seen to bind rRNA by itself. It is important during the early stages of 50S assembly. The chain is Large ribosomal subunit protein uL13 from Orientia tsutsugamushi (strain Boryong) (Rickettsia tsutsugamushi).